The sequence spans 103 residues: Small ribosomal subunit protein uS10 (103 aa).

The protein belongs to the universal ribosomal protein uS10 family. In terms of assembly, part of the 30S ribosomal subunit.

Its function is as follows. Involved in the binding of tRNA to the ribosomes. The chain is Small ribosomal subunit protein uS10 from Syntrophobacter fumaroxidans (strain DSM 10017 / MPOB).